Here is a 208-residue protein sequence, read N- to C-terminus: Na(+)-translocating NADH-quinone reductase subunit D (208 aa).

The next 5 membrane-spanning stretches (helical) occupy residues 42 to 62 (FVMA…VSLI), 72 to 92 (IIVQ…ILKA), 103 to 123 (VFVG…AFAM), 131 to 151 (FVDG…VAFF), and 178 to 198 (NGLF…IWGL).

The protein belongs to the NqrDE/RnfAE family. In terms of assembly, composed of six subunits; NqrA, NqrB, NqrC, NqrD, NqrE and NqrF.

Its subcellular location is the cell inner membrane. The catalysed reaction is a ubiquinone + n Na(+)(in) + NADH + H(+) = a ubiquinol + n Na(+)(out) + NAD(+). Functionally, NQR complex catalyzes the reduction of ubiquinone-1 to ubiquinol by two successive reactions, coupled with the transport of Na(+) ions from the cytoplasm to the periplasm. NqrA to NqrE are probably involved in the second step, the conversion of ubisemiquinone to ubiquinol. The protein is Na(+)-translocating NADH-quinone reductase subunit D of Haemophilus influenzae (strain 86-028NP).